The sequence spans 178 residues: Interleukin-10 (178 aa).

Residues 1 to 18 (MHSSALLCYLVFLAGVGA) form the signal peptide. Intrachain disulfides connect Cys-30–Cys-126 and Cys-80–Cys-132. The N-linked (GlcNAc...) asparagine glycan is linked to Asn-67. Asn-134 carries N-linked (GlcNAc...) asparagine glycosylation.

This sequence belongs to the IL-10 family. As to quaternary structure, homodimer. Interacts with IL10RA and IL10RB.

Its subcellular location is the secreted. Functionally, major immune regulatory cytokine that acts on many cells of the immune system where it has profound anti-inflammatory functions, limiting excessive tissue disruption caused by inflammation. Mechanistically, IL10 binds to its heterotetrameric receptor comprising IL10RA and IL10RB leading to JAK1 and STAT2-mediated phosphorylation of STAT3. In turn, STAT3 translocates to the nucleus where it drives expression of anti-inflammatory mediators. Targets antigen-presenting cells (APCs) such as macrophages and monocytes and inhibits their release of pro-inflammatory cytokines including granulocyte-macrophage colony-stimulating factor /GM-CSF, granulocyte colony-stimulating factor/G-CSF, IL-1 alpha, IL-1 beta, IL-6, IL-8 and TNF-alpha. Also interferes with antigen presentation by reducing the expression of MHC-class II and co-stimulatory molecules, thereby inhibiting their ability to induce T cell activation. In addition, controls the inflammatory response of macrophages by reprogramming essential metabolic pathways including mTOR signaling. The chain is Interleukin-10 (IL10) from Equus caballus (Horse).